Consider the following 141-residue polypeptide: Large ribosomal subunit protein uL11 (141 aa).

Belongs to the universal ribosomal protein uL11 family. Part of the ribosomal stalk of the 50S ribosomal subunit. Interacts with L10 and the large rRNA to form the base of the stalk. L10 forms an elongated spine to which L12 dimers bind in a sequential fashion forming a multimeric L10(L12)X complex. One or more lysine residues are methylated.

In terms of biological role, forms part of the ribosomal stalk which helps the ribosome interact with GTP-bound translation factors. The polypeptide is Large ribosomal subunit protein uL11 (Clostridioides difficile (strain 630) (Peptoclostridium difficile)).